A 934-amino-acid polypeptide reads, in one-letter code: ATP-dependent RNA helicase dbp10 (934 aa).

Residues 1–57 (MPHRAASPAMSENEFDITGALFQNDSDSDNEQPSAKSKRQPPKKVPSQALDFLGDVN) form a disordered region. A compositionally biased stretch (polar residues) spans 21–35 (LFQNDSDSDNEQPSA). The short motif at 90–118 (GGFQAMGLSANLLKAIARKGFSVPTPIQR) is the Q motif element. Residues 121–293 (IPVIMDDQDV…RAGLQEPTLV (173 aa)) form the Helicase ATP-binding domain. 134-141 (ARTGSGKT) contributes to the ATP binding site. Residues 241 to 244 (DEAD) carry the DEAD box motif. The interval 334-358 (GPTEVSQQRKEEDASAKNWKNKKRK) is disordered. One can recognise a Helicase C-terminal domain in the interval 361–515 (EMEKAVNMRE…QVNFAEDVVT (155 aa)). The segment covering 639–654 (LESKKKRAQANEKSEF) has biased composition (basic and acidic residues). 2 disordered regions span residues 639 to 688 (LESK…PTGV) and 854 to 934 (AISG…SRKK). The span at 669–684 (GENENEGAFSDEDDDV) shows a compositional bias: acidic residues. 2 stretches are compositionally biased toward basic and acidic residues: residues 865–893 (EQAP…ERAM) and 903–915 (GKSE…DIRI). Residues 916–934 (ARKLKQKRREKNARPSRKK) are compositionally biased toward basic residues.

Belongs to the DEAD box helicase family. DDX54/DBP10 subfamily.

It localises to the nucleus. It is found in the nucleolus. The catalysed reaction is ATP + H2O = ADP + phosphate + H(+). Functionally, ATP-binding RNA helicase involved in the biogenesis of 60S ribosomal subunits and is required for the normal formation of 25S and 5.8S rRNAs. The protein is ATP-dependent RNA helicase dbp10 (dbp10) of Neosartorya fischeri (strain ATCC 1020 / DSM 3700 / CBS 544.65 / FGSC A1164 / JCM 1740 / NRRL 181 / WB 181) (Aspergillus fischerianus).